The following is a 217-amino-acid chain: UPF0502 protein KPK_3478 (217 aa).

The protein belongs to the UPF0502 family.

The protein is UPF0502 protein KPK_3478 of Klebsiella pneumoniae (strain 342).